The primary structure comprises 500 residues: Trehalose-6-phosphate synthase (500 aa).

D-glucose 6-phosphate is bound at residue Arg-28. A UDP-alpha-D-glucose-binding site is contributed by 48-49 (GG). D-glucose 6-phosphate-binding residues include Tyr-104 and Asp-158. UDP-alpha-D-glucose contacts are provided by Arg-300 and Lys-305. Position 338 (Arg-338) interacts with D-glucose 6-phosphate. Position 403–407 (403–407 (LVAKE)) interacts with UDP-alpha-D-glucose.

Belongs to the glycosyltransferase 20 family. Homotetramer.

The enzyme catalyses ADP-alpha-D-glucose + D-glucose 6-phosphate = alpha,alpha-trehalose 6-phosphate + ADP + H(+). It catalyses the reaction CDP-alpha-D-glucose + D-glucose 6-phosphate = alpha,alpha-trehalose 6-phosphate + CDP + H(+). The catalysed reaction is GDP-alpha-D-glucose + D-glucose 6-phosphate = alpha,alpha-trehalose 6-phosphate + GDP + H(+). It carries out the reaction TDP-alpha-D-glucose + D-glucose 6-phosphate = 5-methyl-UDP + alpha,alpha-trehalose 6-phosphate + H(+). The enzyme catalyses D-glucose 6-phosphate + UDP-alpha-D-glucose = alpha,alpha-trehalose 6-phosphate + UDP + H(+). It functions in the pathway glycan biosynthesis; trehalose biosynthesis. In terms of biological role, probably involved in the osmoprotection via the biosynthesis of trehalose and in the production of glycogen and alpha-glucan via the TreS-Pep2 branch involved in the biosynthesis of maltose-1-phosphate (M1P). Catalyzes the transfer of glucose from UDP-glucose (UDP-Glc) to D-glucose 6-phosphate (Glc-6-P) to form trehalose-6-phosphate. Probably also able to use ADP-Glc, CDP-Glc, GDP-Glc and TDP-Glc as glucosyl donors. The protein is Trehalose-6-phosphate synthase of Mycobacterium marinum (strain ATCC BAA-535 / M).